A 1863-amino-acid chain; its full sequence is Breast cancer type 1 susceptibility protein homolog (1863 aa).

Met1 is subject to N-acetylmethionine. Residues 24–65 (CPICLELIKEPVSTKCDHIFCKFCMLKLLNQKKGPSQCPLCK) form an RING-type zinc finger. Lys109 participates in a covalent cross-link: Glycyl lysine isopeptide (Lys-Gly) (interchain with G-Cter in SUMO2). Ser114 carries the post-translational modification Phosphoserine. The interval 231-267 (TDVTNTEHHQPSNNDLNTTEKRATERHPEKYQGSSVS) is disordered. The span at 248–260 (TTEKRATERHPEK) shows a compositional bias: basic and acidic residues. Lys301 participates in a covalent cross-link: Glycyl lysine isopeptide (Lys-Gly) (interchain with G-Cter in SUMO2). The interval 306-338 (NKSKQPGLARSQHNRWAGSKETCNDRQTPSTEK) is disordered. A Glycyl lysine isopeptide (Lys-Gly) (interchain with G-Cter in SUMO2) cross-link involves residue Lys339. A phosphoserine mark is found at Ser395, Ser398, Ser423, and Ser434. Residues Lys443, Lys459, and Lys519 each participate in a glycyl lysine isopeptide (Lys-Gly) (interchain with G-Cter in SUMO2) cross-link. Ser551 carries the phosphoserine modification. Residues Lys583 and Lys654 each participate in a glycyl lysine isopeptide (Lys-Gly) (interchain with G-Cter in SUMO2) cross-link. The tract at residues 650-735 (IKKKKYNQMP…LPREEKEEKL (86 aa)) is disordered. Phosphoserine occurs at positions 694, 708, and 725. Polar residues predominate over residues 705 to 716 (APGSFTNCSNTS). Residues Lys734 and Lys739 each participate in a glycyl lysine isopeptide (Lys-Gly) (interchain with G-Cter in SUMO2) cross-link. A phosphoserine mark is found at Ser753 and Ser840. Glycyl lysine isopeptide (Lys-Gly) (interchain with G-Cter in SUMO2) cross-links involve residues Lys918 and Lys987. Ser988 carries the phosphoserine; by CHEK2 modification. Position 1009 is a phosphoserine (Ser1009). Residues 1045-1066 (NEVGSSTNEVGSSINEVGSSDE) form a disordered region. Lys1079 participates in a covalent cross-link: Glycyl lysine isopeptide (Lys-Gly) (interchain with G-Cter in SUMO2). 11 positions are modified to phosphoserine: Ser1143, Ser1189, Ser1191, Ser1211, Ser1217, Ser1218, Ser1280, Ser1328, Ser1336, Ser1342, and Ser1387. A disordered region spans residues 1181–1216 (VQRGELSRSPSPFTHTHLAQGYRRGAKKLESSEENL). Residues 1322-1394 (KQMRHQSESQ…LSSQSDILTT (73 aa)) form a disordered region. The segment covering 1342-1360 (SDDEERGTDLEENNQEEQG) has biased composition (acidic residues). The segment covering 1373 to 1394 (ESETSVSEDCSGLSSQSDILTT) has biased composition (polar residues). Thr1394 carries the phosphothreonine modification. Residues 1397 to 1424 (RDTMQDNLIKLQQEMAELEAVLEQHGSQ) are interaction with PALB2. Residues Ser1423, Ser1457, Ser1524, and Ser1542 each carry the phosphoserine modification. The disordered stretch occupies residues 1440–1504 (EDLRNPEQST…RSSPSKCPSL (65 aa)). Over residues 1445–1470 (PEQSTSEKAVLTSQKSSEYPISQNPE) the composition is skewed to polar residues. 2 disordered regions span residues 1540-1597 (EESG…PSST) and 1610-1642 (SAQS…LTAS). Positions 1610–1624 (SAQSPAAAQTTNTAG) are enriched in polar residues. BRCT domains are found at residues 1642 to 1736 (STER…DFEV) and 1756 to 1855 (QDRK…TYLI).

In terms of assembly, heterodimer with BARD1. Part of the BRCA1-associated genome surveillance complex (BASC), which contains BRCA1, MSH2, MSH6, MLH1, ATM, BLM, PMS2 and the MRE11-RAD50-NBN protein (MRN) complex. This association could be a dynamic process changing throughout the cell cycle and within subnuclear domains. Component of the BRCA1-A complex, at least composed of BRCA1, BARD1, UIMC1/RAP80, ABRAXAS1, BRCC3/BRCC36, BABAM2 and BABAM1/NBA1. Interacts (via the BRCT domains) with ABRAXAS1 (phosphorylated form); this is important for recruitment to sites of DNA damage. Can form a heterotetramer with two molecules of ABRAXAS1 (phosphorylated form). Component of the BRCA1-RBBP8 complex. Interacts (via the BRCT domains) with RBBP8 ('Ser-327' phosphorylated form); the interaction ubiquitinates RBBP8, regulates CHEK1 activation, and involves RBBP8 in BRCA1-dependent G2/M checkpoint control on DNA damage. Associates with RNA polymerase II holoenzyme. Interacts with SMC1A, NELFB, DCLRE1C, CLSPN. CHEK1, CHEK2, BAP1, BRCC3, UBXN1 and PCLAF. Interacts (via BRCT domains) with BRIP1 (phosphorylated form). Interacts with FANCD2 (ubiquitinated form). Interacts with H2AX (phosphorylated on 'Ser-140'). Interacts (via the BRCT domains) with ACACA (phosphorylated form); the interaction prevents dephosphorylation of ACACA. Part of a BRCA complex containing BRCA1, BRCA2 and PALB2. Interacts directly with PALB2; the interaction is essential for its function in HRR. Interacts directly with BRCA2; the interaction occurs only in the presence of PALB2 which serves as the bridging protein. Interacts (via the BRCT domains) with LMO4; the interaction represses the transcriptional activity of BRCA1. Interacts (via the BRCT domains) with CCAR2 (via N-terminus); the interaction represses the transcriptional activator activity of BRCA1. Interacts with EXD2. Interacts (via C-terminus) with DHX9; this interaction is direct and links BRCA1 to the RNA polymerase II holoenzyme. Interacts with DNA helicase ZGRF1; the interaction is increased following DNA damage induction. Post-translationally, phosphorylated in response to IR, UV, and various stimuli that cause checkpoint activation, probably by ATM or ATR. Phosphorylation at Ser-988 by CHEK2 regulates mitotic spindle assembly. Phosphorylation by AURKA regulates centrosomal microtubule nucleation. Autoubiquitinated, undergoes 'Lys-6'-linked polyubiquitination. 'Lys-6'-linked polyubiquitination does not promote degradation.

The protein resides in the nucleus. Its subcellular location is the chromosome. It localises to the cytoplasm. The catalysed reaction is S-ubiquitinyl-[E2 ubiquitin-conjugating enzyme]-L-cysteine + [acceptor protein]-L-lysine = [E2 ubiquitin-conjugating enzyme]-L-cysteine + N(6)-ubiquitinyl-[acceptor protein]-L-lysine.. Its pathway is protein modification; protein ubiquitination. E3 ubiquitin-protein ligase that specifically mediates the formation of 'Lys-6'-linked polyubiquitin chains and plays a central role in DNA repair by facilitating cellular responses to DNA damage. It is unclear whether it also mediates the formation of other types of polyubiquitin chains. The BRCA1-BARD1 heterodimer coordinates a diverse range of cellular pathways such as DNA damage repair, ubiquitination and transcriptional regulation to maintain genomic stability. Regulates centrosomal microtubule nucleation. Required for appropriate cell cycle arrests after ionizing irradiation in both the S-phase and the G2 phase of the cell cycle. Required for FANCD2 targeting to sites of DNA damage. Inhibits lipid synthesis by binding to inactive phosphorylated ACACA and preventing its dephosphorylation. Contributes to homologous recombination repair (HRR) via its direct interaction with PALB2, fine-tunes recombinational repair partly through its modulatory role in the PALB2-dependent loading of BRCA2-RAD51 repair machinery at DNA breaks. Component of the BRCA1-RBBP8 complex which regulates CHEK1 activation and controls cell cycle G2/M checkpoints on DNA damage via BRCA1-mediated ubiquitination of RBBP8. Acts as a transcriptional activator. This is Breast cancer type 1 susceptibility protein homolog (BRCA1) from Pongo pygmaeus (Bornean orangutan).